The sequence spans 99 residues: Aspartyl/glutamyl-tRNA(Asn/Gln) amidotransferase subunit C (99 aa).

The protein belongs to the GatC family. Heterotrimer of A, B and C subunits.

It catalyses the reaction L-glutamyl-tRNA(Gln) + L-glutamine + ATP + H2O = L-glutaminyl-tRNA(Gln) + L-glutamate + ADP + phosphate + H(+). The enzyme catalyses L-aspartyl-tRNA(Asn) + L-glutamine + ATP + H2O = L-asparaginyl-tRNA(Asn) + L-glutamate + ADP + phosphate + 2 H(+). Functionally, allows the formation of correctly charged Asn-tRNA(Asn) or Gln-tRNA(Gln) through the transamidation of misacylated Asp-tRNA(Asn) or Glu-tRNA(Gln) in organisms which lack either or both of asparaginyl-tRNA or glutaminyl-tRNA synthetases. The reaction takes place in the presence of glutamine and ATP through an activated phospho-Asp-tRNA(Asn) or phospho-Glu-tRNA(Gln). This chain is Aspartyl/glutamyl-tRNA(Asn/Gln) amidotransferase subunit C, found in Cupriavidus metallidurans (strain ATCC 43123 / DSM 2839 / NBRC 102507 / CH34) (Ralstonia metallidurans).